A 307-amino-acid chain; its full sequence is Protein ORANGE, chloroplastic (307 aa).

The N-terminal 55 residues, 1–55, are a transit peptide targeting the chloroplast; sequence MSSLGRILSVSYPPDPYTWRFSQYKLSSSLGRNRRLRWRFTALDPESSSLDSESS. Lys-58 participates in a covalent cross-link: Glycyl lysine isopeptide (Lys-Gly) (interchain with G-Cter in ubiquitin). 2 consecutive transmembrane segments (helical) span residues 146 to 166 and 199 to 219; these read VYYA…GLLA and IVAS…VVEV. A CR-type-like region spans residues 208–299; sequence VGVISALMVV…CTGMAMASEH (92 aa). The stretch at 230-237 is one CXXCXGXG motif repeat; the sequence is CKYCLGTG. The CXXCXXXG motif repeat unit spans residues 241–248; sequence CARCSSTG. Residues 274 to 281 form a CXXCXGXG motif repeat; it reads CSNCSGAG. A CXXCXXXG motif repeat occupies 285–292; it reads CPTCLCTG.

Belongs to the orange-like family. Interacts with the phytoene synthase PSY1 in chloroplast. Binds to the eukaryotic release factor eRF1-2. Interacts with the transcription factor TCP14 in the nucleus to repress chloroplast biogenesis in etiolated seedlings. Associates to the E2 ubiquitin-conjugating enzyme UBC19. Ubiquitination at K-58 by UBC19 is essential for nuclear localization.

It localises to the plastid. It is found in the chloroplast membrane. The protein localises to the nucleus. Its subcellular location is the cytoplasm. Involved in chromoplast differentiation. Associated with a cellular process that triggers the differentiation of pro-plastids or other non-colored plastids into chromoplasts for carotenoid accumulation. Is associated with carotenoid accumulation in chromoplasts. Functions as a major regulator of the phytoene synthase PSY1 protein level and activity. Modulates carotenoid biosynthesis by means of post-transcriptional regulation of PSY1. Modulates carotenoid biosynthesis in part by up-regulating a series of endogenous carotenogenic genes. Regulates cell elongation in the petiole in an eRF1-2-dependent manner. Binds to and represses TCP14 transactivation activity, thus preventing early light-induced proteins (ELIPs, e.g. ELIP1 and ELIP2) expression and delaying chloroplast biogenesis (e.g. lower chlorophyll biosynthesis and slower development of thylakoid membranes) in germinating cotyledons and etiolated seedlings; reduced levels upon illumination combined to TCP14 accumulation derepress chloroplast biogenesis during deetiolation. This Arabidopsis thaliana (Mouse-ear cress) protein is Protein ORANGE, chloroplastic.